The chain runs to 817 residues: MAKTAASSALEDLDLSGEEVQRLTSAFQDPEFRRMFSDYAAEITDPENRRRYEEEITALERERGVEVRFVHPEPGHVLRTSLDGEHRCFVNVCSNSLVGAPSSRPGPGRGGTAAGSHWSLPYSLAPGRQYAGRNGNRYTVYDVVFHPEALALARSHERFREMLDATALEAVEQQFGVRLDRRNAKTLKIKYKGTPEAAVLRTPLPEGVRAQPEGELPGLLPYPPYPYHYPAAAESTARSPASPAPKAVQRPEPTEPRCSVVQRHHVDLQDYRCSRDAAPSTVPHELVVTIELPLLRSAERAELEVKGKLLCLDSRNPDYRLRLSLPYPVDDGRGRAQYNKARRQLVVTLPVALAVARQDFSTTPEGPTAETGTDNIACTSAGDLAGAREESADSSGADHGRKSCVVAPDAGTAKAEGELVPEPEQDFGGDSVTPLGPGEGTTPENRSLLYSAFQSGDAESLAERSGVYGDLSVQTSEEQEGTCHDTSGSDMGGPGTESIKPLCPPLQCNQDEDSLTLLIQVPGIQPQSLHGDLSPFSYELCFSTQDSGYSFTLQFAPENKLSTKEPAISISLNNAVIVLAKSPESHGLWREWYWGLNKDSLEERLFIDEENVNEFLEEVVRSPLKPARSLSPPLIEVLQVTEEQIQIHAKLQECSDPDGLQGKEKGVKEECPLSEKENTEHSTTSTADSNSSVAVEGLKINTCGAVGLQQGCPDVPHVLSGKRLQSEAKMDPEFIRESSTAYSAEEKENIKEPVITKEKKIGGDHLSSLPNKTAVQNTHDFDTIKETNMQDGSVQIIKDHTTHCAFDFQNSLLYDLD.

Disordered stretches follow at residues 233–259 (AEST…PRCS), 385–404 (AGAR…RKSC), 410–445 (AGTA…TPEN), and 473–503 (VQTS…KPLC). Residues 386-401 (GAREESADSSGADHGR) are compositionally biased toward basic and acidic residues. Phosphoserine occurs at positions 622 and 631. The tract at residues 653–692 (ECSDPDGLQGKEKGVKEECPLSEKENTEHSTTSTADSNSS) is disordered. Positions 661-680 (QGKEKGVKEECPLSEKENTE) are enriched in basic and acidic residues. Residues 681–692 (HSTTSTADSNSS) show a composition bias toward polar residues.

It belongs to the PIH1 family. Kintoun subfamily. In terms of assembly, interacts with CFAP300. Interacts with DNAI2 and HSPA1A. Interacts with DNAAF4. Interacts with DNAAF6/PIH1D3.

The protein resides in the cytoplasm. It is found in the dynein axonemal particle. Its function is as follows. Required for cytoplasmic pre-assembly of axonemal dyneins, thereby playing a central role in motility in cilia and flagella. Involved in pre-assembly of dynein arm complexes in the cytoplasm before intraflagellar transport loads them for the ciliary compartment. This is Protein kintoun from Rattus norvegicus (Rat).